Reading from the N-terminus, the 375-residue chain is Probable aminomethyltransferase (375 aa).

The protein belongs to the GcvT family. In terms of assembly, the glycine cleavage system is composed of four proteins: P, T, L and H.

It carries out the reaction N(6)-[(R)-S(8)-aminomethyldihydrolipoyl]-L-lysyl-[protein] + (6S)-5,6,7,8-tetrahydrofolate = N(6)-[(R)-dihydrolipoyl]-L-lysyl-[protein] + (6R)-5,10-methylene-5,6,7,8-tetrahydrofolate + NH4(+). The glycine cleavage system catalyzes the degradation of glycine. This Aeropyrum pernix (strain ATCC 700893 / DSM 11879 / JCM 9820 / NBRC 100138 / K1) protein is Probable aminomethyltransferase.